Here is a 251-residue protein sequence, read N- to C-terminus: Ubiquinone/menaquinone biosynthesis C-methyltransferase UbiE (251 aa).

S-adenosyl-L-methionine contacts are provided by residues Thr74, Asp95, and 123–124; that span reads NA.

This sequence belongs to the class I-like SAM-binding methyltransferase superfamily. MenG/UbiE family.

It catalyses the reaction a 2-demethylmenaquinol + S-adenosyl-L-methionine = a menaquinol + S-adenosyl-L-homocysteine + H(+). It carries out the reaction a 2-methoxy-6-(all-trans-polyprenyl)benzene-1,4-diol + S-adenosyl-L-methionine = a 5-methoxy-2-methyl-3-(all-trans-polyprenyl)benzene-1,4-diol + S-adenosyl-L-homocysteine + H(+). It participates in quinol/quinone metabolism; menaquinone biosynthesis; menaquinol from 1,4-dihydroxy-2-naphthoate: step 2/2. It functions in the pathway cofactor biosynthesis; ubiquinone biosynthesis. Its function is as follows. Methyltransferase required for the conversion of demethylmenaquinol (DMKH2) to menaquinol (MKH2) and the conversion of 2-polyprenyl-6-methoxy-1,4-benzoquinol (DDMQH2) to 2-polyprenyl-3-methyl-6-methoxy-1,4-benzoquinol (DMQH2). In Shewanella sediminis (strain HAW-EB3), this protein is Ubiquinone/menaquinone biosynthesis C-methyltransferase UbiE.